Reading from the N-terminus, the 169-residue chain is Disulfide bond formation protein B (169 aa).

Over 1–13 (MQSLISFAHSRLS) the chain is Cytoplasmic. A helical transmembrane segment spans residues 14 to 30 (WGILALSALALESAALY). Residues 31–48 (FQHIMKLDPCVMCIYQRV) are Periplasmic-facing. The cysteines at positions 40 and 43 are disulfide-linked. A helical transmembrane segment spans residues 49–64 (AVFGLLGAGLFGFMAP). Residues 65-71 (ANRVIRA) are Cytoplasmic-facing. The helical transmembrane segment at 72–89 (LGALLWGISAAWGLKLAL) threads the bilayer. The Periplasmic segment spans residues 90–144 (ELVDMQNNPNPFSTCSFLPEFPSWLQLHEWLPSVFMPTGMCTDIPWEFAGVTMGE). Cys-104 and Cys-130 are oxidised to a cystine. A helical transmembrane segment spans residues 145 to 163 (WMIVAFSVYLLAWLAFIVP). The Cytoplasmic portion of the chain corresponds to 164–169 (MLKKSA).

Belongs to the DsbB family.

The protein resides in the cell inner membrane. Functionally, required for disulfide bond formation in some periplasmic proteins. Acts by oxidizing the DsbA protein. This chain is Disulfide bond formation protein B, found in Shewanella amazonensis (strain ATCC BAA-1098 / SB2B).